A 307-amino-acid chain; its full sequence is NAD kinase (307 aa).

The active-site Proton acceptor is aspartate 80. NAD(+) is bound by residues aspartate 80 to glycine 81, histidine 85, asparagine 154 to aspartate 155, histidine 165, histidine 182, aspartate 184, threonine 195 to serine 200, and glutamine 254.

The protein belongs to the NAD kinase family. A divalent metal cation serves as cofactor.

The protein localises to the cytoplasm. It catalyses the reaction NAD(+) + ATP = ADP + NADP(+) + H(+). Involved in the regulation of the intracellular balance of NAD and NADP, and is a key enzyme in the biosynthesis of NADP. Catalyzes specifically the phosphorylation on 2'-hydroxyl of the adenosine moiety of NAD to yield NADP. The chain is NAD kinase from Acinetobacter baylyi (strain ATCC 33305 / BD413 / ADP1).